The primary structure comprises 78 residues: Sec-independent protein translocase protein TatA (78 aa).

The chain crosses the membrane as a helical span at residues 4–21; that stretch reads SFQHILILLVVVLLLFGR. A disordered region spans residues 49–78; sequence TAKSDSIKTIDNTGKPTNVQANPQRQDSTV. A compositionally biased stretch (polar residues) spans 57–78; sequence TIDNTGKPTNVQANPQRQDSTV.

It belongs to the TatA/E family. The Tat system comprises two distinct complexes: a TatABC complex, containing multiple copies of TatA, TatB and TatC subunits, and a separate TatA complex, containing only TatA subunits. Substrates initially bind to the TatABC complex, which probably triggers association of the separate TatA complex to form the active translocon.

The protein localises to the cell inner membrane. Part of the twin-arginine translocation (Tat) system that transports large folded proteins containing a characteristic twin-arginine motif in their signal peptide across membranes. TatA could form the protein-conducting channel of the Tat system. The protein is Sec-independent protein translocase protein TatA of Afipia carboxidovorans (strain ATCC 49405 / DSM 1227 / KCTC 32145 / OM5) (Oligotropha carboxidovorans).